We begin with the raw amino-acid sequence, 213 residues long: Ion-translocating oxidoreductase complex subunit A (213 aa).

Residues 1–24 (MLLLWQSRIMPGSEANIYITMTEY) are Periplasmic-facing. Residues 25–45 (LLLLIGTVLVNNFVLVKFLGL) form a helical membrane-spanning segment. Residues 46-58 (CPFMGVSKKLETA) are Cytoplasmic-facing. Residues 59-79 (IGMGLATTFVLTLASVCAYLV) form a helical membrane-spanning segment. The Periplasmic portion of the chain corresponds to 80-86 (ESYVLRP). Residues 87–107 (LGIEYLRTMSFILVIAVVVQF) traverse the membrane as a helical segment. Residues 108–121 (TEMVVHKTSPTLYR) lie on the Cytoplasmic side of the membrane. The chain crosses the membrane as a helical span at residues 122 to 142 (LLGIFLPLITTNCAVLGVALL). Residues 143-153 (NINENHNFIQS) are Periplasmic-facing. The chain crosses the membrane as a helical span at residues 154 to 174 (IIYGFGAAVGFSLVLILFASM). Topologically, residues 175–190 (RERIHVADVPAPFKGA) are cytoplasmic. The helical transmembrane segment at 191–211 (SIAMITAGLMSLAFMGFTGLV) threads the bilayer. The Periplasmic segment spans residues 212–213 (KL).

It belongs to the NqrDE/RnfAE family. As to quaternary structure, the complex is composed of six subunits: RnfA, RnfB, RnfC, RnfD, RnfE and RnfG.

It localises to the cell inner membrane. In terms of biological role, part of a membrane-bound complex that couples electron transfer with translocation of ions across the membrane. This is Ion-translocating oxidoreductase complex subunit A from Vibrio cholerae serotype O1 (strain ATCC 39541 / Classical Ogawa 395 / O395).